We begin with the raw amino-acid sequence, 208 residues long: dITP/XTP pyrophosphatase (208 aa).

S16 to K21 is a binding site for substrate. D79 acts as the Proton acceptor in catalysis. Position 79 (D79) interacts with Mg(2+). Residues S80, F166 to D169, K189, and H194 to R195 contribute to the substrate site.

This sequence belongs to the HAM1 NTPase family. As to quaternary structure, homodimer. It depends on Mg(2+) as a cofactor.

It carries out the reaction XTP + H2O = XMP + diphosphate + H(+). The enzyme catalyses dITP + H2O = dIMP + diphosphate + H(+). It catalyses the reaction ITP + H2O = IMP + diphosphate + H(+). In terms of biological role, pyrophosphatase that catalyzes the hydrolysis of nucleoside triphosphates to their monophosphate derivatives, with a high preference for the non-canonical purine nucleotides XTP (xanthosine triphosphate), dITP (deoxyinosine triphosphate) and ITP. Seems to function as a house-cleaning enzyme that removes non-canonical purine nucleotides from the nucleotide pool, thus preventing their incorporation into DNA/RNA and avoiding chromosomal lesions. This Acinetobacter baumannii (strain AB307-0294) protein is dITP/XTP pyrophosphatase.